The primary structure comprises 438 residues: tRNA-2-methylthio-N(6)-dimethylallyladenosine synthase (438 aa).

In terms of domain architecture, MTTase N-terminal spans 3 to 123 (KRLFVKTYGC…LPEMVAQAAR (121 aa)). [4Fe-4S] cluster is bound by residues Cys12, Cys48, Cys86, Cys160, Cys164, and Cys167. In terms of domain architecture, Radical SAM core spans 146–374 (HAEGTSAFLS…QALLLDQTMR (229 aa)). One can recognise a TRAM domain in the interval 377-438 (HACVGREMRI…HPNSLEAVPA (62 aa)).

This sequence belongs to the methylthiotransferase family. MiaB subfamily. In terms of assembly, monomer. The cofactor is [4Fe-4S] cluster.

It localises to the cytoplasm. The enzyme catalyses N(6)-dimethylallyladenosine(37) in tRNA + (sulfur carrier)-SH + AH2 + 2 S-adenosyl-L-methionine = 2-methylsulfanyl-N(6)-dimethylallyladenosine(37) in tRNA + (sulfur carrier)-H + 5'-deoxyadenosine + L-methionine + A + S-adenosyl-L-homocysteine + 2 H(+). Functionally, catalyzes the methylthiolation of N6-(dimethylallyl)adenosine (i(6)A), leading to the formation of 2-methylthio-N6-(dimethylallyl)adenosine (ms(2)i(6)A) at position 37 in tRNAs that read codons beginning with uridine. The sequence is that of tRNA-2-methylthio-N(6)-dimethylallyladenosine synthase from Paramagnetospirillum magneticum (strain ATCC 700264 / AMB-1) (Magnetospirillum magneticum).